Consider the following 297-residue polypeptide: MAKSSWEGNCFLNFFNNKSSSGKDDKTIFKSKFTSPYKLLKCSYDQEGRCILPILHTAGGLVGGDLLEFEANIGINSKVLLTTSSAQKVYGSVGRSKINPEGTFSSQKTKISILDNSHLEYLPQETIVFANGLYSQEFNIKISDNSSFLFTDLIRLGRSSAGESIESGVFRSKLEIMRNGNLCDDWEFVDQIELTKFSFEAKSGMDFKPVFGSLIWICEKEFPITKISYLKEKIKIIFKENNNYLSLGTLENGLSIRFLGTSSQDARKCFFSIWTQIRTVCGFCKPEYQGVWPLQDL.

The protein belongs to the UreD family. UreD, UreF and UreG form a complex that acts as a GTP-hydrolysis-dependent molecular chaperone, activating the urease apoprotein by helping to assemble the nickel containing metallocenter of UreC. The UreE protein probably delivers the nickel.

The protein resides in the cytoplasm. Required for maturation of urease via the functional incorporation of the urease nickel metallocenter. The chain is Urease accessory protein UreD from Prochlorococcus marinus subsp. pastoris (strain CCMP1986 / NIES-2087 / MED4).